The chain runs to 89 residues: Cell division topological specificity factor (89 aa).

The protein belongs to the MinE family.

Its function is as follows. Prevents the cell division inhibition by proteins MinC and MinD at internal division sites while permitting inhibition at polar sites. This ensures cell division at the proper site by restricting the formation of a division septum at the midpoint of the long axis of the cell. The chain is Cell division topological specificity factor from Klebsiella pneumoniae (strain 342).